Reading from the N-terminus, the 307-residue chain is uncharacterized protein (307 aa).

Residues 54–307 enclose the EAL domain; sequence RHYLSTSMRV…KALPVDFFRE (254 aa). 2 helical membrane passes run 158 to 178 and 203 to 223; these read PGFLVLVEGVLGETGLPAHAL and ALGVGIAIDDFGIGFSSLAYL.

The protein resides in the cell membrane. This is an uncharacterized protein from Mycobacterium tuberculosis (strain CDC 1551 / Oshkosh).